The following is a 186-amino-acid chain: Elongation factor P (186 aa).

It belongs to the elongation factor P family.

It is found in the cytoplasm. It participates in protein biosynthesis; polypeptide chain elongation. Its function is as follows. Involved in peptide bond synthesis. Stimulates efficient translation and peptide-bond synthesis on native or reconstituted 70S ribosomes in vitro. Probably functions indirectly by altering the affinity of the ribosome for aminoacyl-tRNA, thus increasing their reactivity as acceptors for peptidyl transferase. The chain is Elongation factor P from Shewanella sp. (strain ANA-3).